Consider the following 132-residue polypeptide: Histone H2A.1 (132 aa).

Residue S2 is modified to N-acetylserine. An N6-acetyllysine mark is found at K5 and K8. 2 positions are modified to N6-succinyllysine: K14 and K22. Q106 is modified (N5-methylglutamine). K120 bears the N6-malonyllysine; alternate mark. A Glycyl lysine isopeptide (Lys-Gly) (interchain with G-Cter in SUMO) cross-link involves residue K127. S129 is modified (phosphoserine). The short motif at 129 to 130 (SQ) is the [ST]-Q motif element.

The protein belongs to the histone H2A family. In terms of assembly, the nucleosome is a histone octamer containing two molecules each of H2A, H2B, H3 and H4 assembled in one H3-H4 heterotetramer and two H2A-H2B heterodimers. The octamer wraps approximately 147 bp of DNA. Phosphorylated to form H2AS128ph (gamma-H2A) in response to DNA double-strand breaks (DSBs) generated by exogenous genotoxic agents and by stalled replication forks. Phosphorylation is dependent on the DNA damage checkpoint kinases MEC1/ATR and TEL1/ATM, spreads on either side of a detected DSB site and may mark the surrounding chromatin for recruitment of proteins required for DNA damage signaling and repair. Gamma-H2A interacts with ARP4, a shared component of the NuA4 histone acetyltransferase complex and the INO80 and SWR1 chromatin remodeling complexes, and serves to recruit first NuA4, mediating histone H4 acetylation, and subsequently the INO80/SWR1 complexes, facilitating DNA resection, to DSB sites. Gamma-H2A is required for sequestering cohesin around the break site, which is important for efficient post-replicative double-strand break repair by homologous recombination, holding the damaged chromatid close to its undamaged sister template. Gamma-H2A is removed from the DNA prior to the strand invasion-primer extension step of the repair process and subsequently dephosphorylated by PPH3, a component of the histone H2A phosphatase complex (HTP-C). Dephosphorylation is necessary for efficient recovery from the DNA damage checkpoint. In terms of processing, N-acetylated by NAT4. Post-translationally, acetylated by ESA1, a component of the NuA4 histone acetyltransferase (HAT) complex, to form H2AK4ac and H2AK7ac. Glutamine methylation at Gln-106 (H2AQ105me) by NOP1 is specifically dedicated to polymerase I. It is present at 35S ribosomal DNA locus and impairs binding of the FACT complex. In terms of processing, sumoylated to from H2AK126su. May lead to transcriptional repression.

The protein localises to the nucleus. The protein resides in the chromosome. Core component of nucleosome which plays a central role in DNA double strand break (DSB) repair. Nucleosomes wrap and compact DNA into chromatin, limiting DNA accessibility to the cellular machineries which require DNA as a template. Histones thereby play a central role in transcription regulation, DNA repair, DNA replication and chromosomal stability. DNA accessibility is regulated via a complex set of post-translational modifications of histones, also called histone code, and nucleosome remodeling. In Saccharomyces cerevisiae (strain ATCC 204508 / S288c) (Baker's yeast), this protein is Histone H2A.1 (HTA1).